The primary structure comprises 962 residues: Exportin-T (962 aa).

Met-1 is modified (N-acetylmethionine). Residues 1–385 (MDEQALLGLN…MLAVMKKLTY (385 aa)) are necessary for interaction with Ran, nuclear localization and nuclear import. The tract at residues 443–962 (FMEVEVAIRL…LKVFFQRAKP (520 aa)) is necessary for tRNA-binding, cytoplasmic localization and nuclear export. Residue Lys-634 is modified to N6-acetyllysine.

Belongs to the exportin family. Found in a complex with XPOT, Ran and tRNA. Probably found in a complex with nucleoporins. Interacts with Ran and tRNA in a GTP-dependent manner.

The protein resides in the nucleus. The protein localises to the cytoplasm. In terms of biological role, mediates the nuclear export of aminoacylated tRNAs. In the nucleus binds to tRNA and to the GTPase Ran in its active GTP-bound form. Docking of this trimeric complex to the nuclear pore complex (NPC) is mediated through binding to nucleoporins. Upon transit of a nuclear export complex into the cytoplasm, disassembling of the complex and hydrolysis of Ran-GTP to Ran-GDP (induced by RANBP1 and RANGAP1, respectively) cause release of the tRNA from the export receptor. XPOT then return to the nuclear compartment and mediate another round of transport. The directionality of nuclear export is thought to be conferred by an asymmetric distribution of the GTP- and GDP-bound forms of Ran between the cytoplasm and nucleus. The sequence is that of Exportin-T (XPOT) from Homo sapiens (Human).